Consider the following 253-residue polypeptide: Sulfate transporter CysZ (253 aa).

4 helical membrane passes run 31 to 51 (FVIL…WWLF), 75 to 95 (LLWP…FSTI), 151 to 171 (IVLL…PVLW), and 222 to 242 (IPLL…AMWV).

The protein belongs to the CysZ family.

It is found in the cell inner membrane. Its function is as follows. High affinity, high specificity proton-dependent sulfate transporter, which mediates sulfate uptake. Provides the sulfur source for the cysteine synthesis pathway. In Escherichia coli O8 (strain IAI1), this protein is Sulfate transporter CysZ.